A 391-amino-acid chain; its full sequence is Nucleosome assembly protein 1-like 1 (391 aa).

A compositionally biased stretch (basic and acidic residues) spans 1–10; that stretch reads MADIDNKEQS. A disordered region spans residues 1 to 32; it reads MADIDNKEQSELDQDLDDVEEVEEEETGEETK. Position 2 is an N-acetylalanine (A2). A Phosphoserine modification is found at S10. Residues 11–28 are compositionally biased toward acidic residues; it reads ELDQDLDDVEEVEEEETG. Residues T62 and T64 each carry the phosphothreonine modification. The residue at position 69 (S69) is a Phosphoserine. K116 carries the N6-acetyllysine modification. An NAP1L motif motif is present at residues 125-150; that stretch reads YEPTEEECEWKPDEEDEISEELKEKA. Positions 132–143 are enriched in acidic residues; that stretch reads CEWKPDEEDEIS. Residues 132–163 form a disordered region; that stretch reads CEWKPDEEDEISEELKEKAKIEDEKKDEEKED. Residue S143 is modified to Phosphoserine. Basic and acidic residues predominate over residues 144–163; that stretch reads EELKEKAKIEDEKKDEEKED. The Nuclear localization signal signature appears at 273–279; it reads IKKKQKH. Residues 346 to 376 are compositionally biased toward acidic residues; sequence AIEDDDDDYDEEGEEADEEGEEEGDEENDPD. Residues 346-391 form a disordered region; it reads AIEDDDDDYDEEGEEADEEGEEEGDEENDPDYDPKKDQNPAECKQQ. 5-glutamyl polyglycine occurs at positions 359 and 360. Over residues 377 to 391 the composition is skewed to basic and acidic residues; sequence YDPKKDQNPAECKQQ. C388 carries the cysteine methyl ester modification. Residue C388 is the site of S-farnesyl cysteine attachment. Positions 389–391 are cleaved as a propeptide — removed in mature form; it reads KQQ.

It belongs to the nucleosome assembly protein (NAP) family. In terms of assembly, homodimer. The dimer binds strongly and sequentially to single and double H2A-H2B heterodimers. Interacts with ERCC6; this interaction increases ERCC6 processivity. Interacts with RAD54. Interacts with SETD1A. Polyglycylated by TTLL10 on glutamate residues, resulting in polyglycine chains on the gamma-carboxyl group. Both polyglutamylation and polyglycylation modifications can coexist on the same protein on adjacent residues, and lowering polyglycylation levels increases polyglutamylation, and reciprocally. In terms of processing, polyglutamylated by TTLL4 on glutamate residues, resulting in polyglutamate chains on the gamma-carboxyl group. Both polyglutamylation and polyglycylation modifications can coexist on the same protein on adjacent residues, and lowering polyglycylation levels increases polyglutamylation, and reciprocally.

It is found in the nucleus. It localises to the melanosome. The protein localises to the cytoplasm. In terms of biological role, histone chaperone that plays a role in the nuclear import of H2A-H2B and nucleosome assembly. Also participates in several important DNA repair mechanisms: greatly enhances ERCC6-mediated chromatin remodeling which is essential for transcription-coupled nucleotide excision DNA repair. Also stimulates homologous recombination (HR) by RAD51 and RAD54 which is essential in mitotic DNA double strand break (DSB) repair. Plays a key role in the regulation of embryonic neurogenesis. Promotes the proliferation of neural progenitors and inhibits neuronal differentiation during cortical development. Regulates neurogenesis via the modulation of RASSF10; regulates RASSF10 expression by promoting SETD1A-mediated H3K4 methylation at the RASSF10 promoter. The protein is Nucleosome assembly protein 1-like 1 (NAP1L1) of Pongo abelii (Sumatran orangutan).